The primary structure comprises 59 residues: Large ribosomal subunit protein uL30 (59 aa).

Belongs to the universal ribosomal protein uL30 family. Part of the 50S ribosomal subunit.

This Bacillus subtilis (strain 168) protein is Large ribosomal subunit protein uL30.